Consider the following 306-residue polypeptide: tRNA pseudouridine synthase B (306 aa).

Asp-43 acts as the Nucleophile in catalysis.

Belongs to the pseudouridine synthase TruB family. Type 1 subfamily.

It carries out the reaction uridine(55) in tRNA = pseudouridine(55) in tRNA. Functionally, responsible for synthesis of pseudouridine from uracil-55 in the psi GC loop of transfer RNAs. This chain is tRNA pseudouridine synthase B, found in Lacticaseibacillus casei (strain BL23) (Lactobacillus casei).